Reading from the N-terminus, the 167-residue chain is IAGCQNVVLCSPPPIADEILYAAQLCGVQEIFNVGGAQAIAALAFGSESVPKVDKIFGPGNAFVTEAKRQVSQRLDGAAIDMPAGPSEVLVIADSGATPDFVASDLLSQAEHGPDSQVILLTPDADIARKVAEAVERQLAELPRADTARQALSASRLIVTKDLAQCV.

The Zn(2+) site is built by Gln109 and His112.

This sequence belongs to the histidinol dehydrogenase family. In terms of assembly, homodimer. It depends on Zn(2+) as a cofactor.

The catalysed reaction is L-histidinol + 2 NAD(+) + H2O = L-histidine + 2 NADH + 3 H(+). Its pathway is amino-acid biosynthesis; L-histidine biosynthesis; L-histidine from 5-phospho-alpha-D-ribose 1-diphosphate: step 9/9. Its function is as follows. Catalyzes the sequential NAD-dependent oxidations of L-histidinol to L-histidinaldehyde and then to L-histidine. The protein is Histidinol dehydrogenase (hisD) of Salmonella enteritidis.